The following is a 582-amino-acid chain: ATP-dependent lipid A-core flippase (582 aa).

A run of 5 helical transmembrane segments spans residues 16–36, 63–83, 153–173, 253–273, and 275–295; these read LWPT…ALIL, VLVW…ITSY, IIGL…ILIV, PIIQ…ASFP, and VMDN…IALM. Residues 28–310 enclose the ABC transmembrane type-1 domain; it reads IVAGVALILN…LTNVNAQFQR (283 aa). The region spanning 342–578 is the ABC transporter domain; that stretch reads VEFRNVTFTY…RGVYAQLHKM (237 aa). 376-383 provides a ligand contact to ATP; the sequence is GRSGSGKS.

It belongs to the ABC transporter superfamily. Lipid exporter (TC 3.A.1.106) family. Homodimer.

The protein localises to the cell inner membrane. It carries out the reaction ATP + H2O + lipid A-core oligosaccharideSide 1 = ADP + phosphate + lipid A-core oligosaccharideSide 2.. Functionally, involved in lipopolysaccharide (LPS) biosynthesis. Translocates lipid A-core from the inner to the outer leaflet of the inner membrane. Transmembrane domains (TMD) form a pore in the inner membrane and the ATP-binding domain (NBD) is responsible for energy generation. The polypeptide is ATP-dependent lipid A-core flippase (Shigella sonnei (strain Ss046)).